The chain runs to 346 residues: NADH-ubiquinone oxidoreductase chain 2 (346 aa).

Helical transmembrane passes span 1 to 21 (MSPY…MLIS), 26 to 46 (WVFM…ILVW), 60 to 80 (FIVQ…SLSG), 96 to 116 (MMIM…YWVV), 122 to 142 (LNYI…LAVL), 151 to 171 (SSML…GGLG), 178 to 198 (LLAF…VAGS), 199 to 219 (LLGL…FSIL), 242 to 262 (VLLG…GFFG), 274 to 294 (LLLG…FYYL), and 320 to 340 (LSGL…LVGG).

It belongs to the complex I subunit 2 family.

It is found in the mitochondrion inner membrane. It catalyses the reaction a ubiquinone + NADH + 5 H(+)(in) = a ubiquinol + NAD(+) + 4 H(+)(out). In terms of biological role, core subunit of the mitochondrial membrane respiratory chain NADH dehydrogenase (Complex I) that is believed to belong to the minimal assembly required for catalysis. Complex I functions in the transfer of electrons from NADH to the respiratory chain. The immediate electron acceptor for the enzyme is believed to be ubiquinone. The chain is NADH-ubiquinone oxidoreductase chain 2 (ND2) from Branchiostoma floridae (Florida lancelet).